Here is a 251-residue protein sequence, read N- to C-terminus: Insulin-induced gene 1 protein (251 aa).

At 1-58 (MQTLEEHCWSCSCTRGRDKKGTKVSAWLARRVGKAMSSLNSLLSLAYSTLASSEGRSL) the chain is on the cytoplasmic side. A helical membrane pass occupies residues 59-81 (IQRSLVLFTVGVFLALVLNLLQI). At 82 to 100 (QRNVTLFPEEVIATIFSSA) the chain is on the extracellular side. The chain crosses the membrane as a helical span at residues 101-118 (WWVPPCCGTAAAVVGLLY). At 119–133 (PCIDSRIGEPHKFKR) the chain is on the cytoplasmic side. Residues 134 to 156 (EWASVMRCIAVFVGINHASAKLD) form a helical membrane-spanning segment. Residues 157–159 (FAN) lie on the Extracellular side of the membrane. A helical transmembrane segment spans residues 160–178 (NVQLSLTLAALSLGLWWTF). At 179 to 183 (DRSRS) the chain is on the cytoplasmic side. The chain crosses the membrane as a helical span at residues 184-205 (GLGLGITIAFLATLITQFLVYN). Over 206–219 (GVYQYTSPDFLYIR) the chain is Extracellular. The chain crosses the membrane as a helical span at residues 220 to 237 (SWLPCIFFSGGVTVGNIG). Over 238–251 (RQLAMGSSEKTHGD) the chain is Cytoplasmic. The KxHxx signature appears at 245 to 251 (SEKTHGD).

The protein belongs to the INSIG family. Interacts with scap; interaction is direct and only takes place in the presence of sterols; it prevents interaction between scap and the coat protein complex II (COPII). Associates with the SCAP-SREBP complex; association is mediated via its interaction with scap and only takes place in the presence of sterols.

Its subcellular location is the endoplasmic reticulum membrane. Functionally, oxysterol-binding protein that mediates feedback control of cholesterol synthesis by controlling both endoplasmic reticulum to Golgi transport of scap and degradation of hmgcr. Acts as a negative regulator of cholesterol biosynthesis by mediating the retention of the SCAP-SREBP complex in the endoplasmic reticulum, thereby blocking the processing of sterol regulatory element-binding proteins (SREBPs). Binds oxysterol, including 25-hydroxycholesterol, regulating interaction with scap and retention of the SCAP-SREBP complex in the endoplasmic reticulum. In presence of oxysterol, interacts with scap, retaining the SCAP-SREBP complex in the endoplasmic reticulum, thereby preventing scap from escorting SREBPs to the Golgi. Sterol deprivation reduces oxysterol-binding, disrupting the interaction between insig1 and scap, thereby promoting Golgi transport of the SCAP-SREBP complex, followed by processing and nuclear translocation of SREBPs. Also regulates cholesterol synthesis by regulating degradation of hmgcr. This is Insulin-induced gene 1 protein from Xenopus laevis (African clawed frog).